The following is a 483-amino-acid chain: Aspartyl/glutamyl-tRNA(Asn/Gln) amidotransferase subunit B (483 aa).

This sequence belongs to the GatB/GatE family. GatB subfamily. Heterotrimer of A, B and C subunits.

The catalysed reaction is L-glutamyl-tRNA(Gln) + L-glutamine + ATP + H2O = L-glutaminyl-tRNA(Gln) + L-glutamate + ADP + phosphate + H(+). It carries out the reaction L-aspartyl-tRNA(Asn) + L-glutamine + ATP + H2O = L-asparaginyl-tRNA(Asn) + L-glutamate + ADP + phosphate + 2 H(+). Its function is as follows. Allows the formation of correctly charged Asn-tRNA(Asn) or Gln-tRNA(Gln) through the transamidation of misacylated Asp-tRNA(Asn) or Glu-tRNA(Gln) in organisms which lack either or both of asparaginyl-tRNA or glutaminyl-tRNA synthetases. The reaction takes place in the presence of glutamine and ATP through an activated phospho-Asp-tRNA(Asn) or phospho-Glu-tRNA(Gln). This Herpetosiphon aurantiacus (strain ATCC 23779 / DSM 785 / 114-95) protein is Aspartyl/glutamyl-tRNA(Asn/Gln) amidotransferase subunit B.